A 453-amino-acid chain; its full sequence is Zinc finger protein Pegasus (453 aa).

3 C2H2-type zinc fingers span residues 101–123 (LKCR…IRIH), 129–151 (HRCH…MRSH), and 157–180 (YKCE…RRKH). The span at 279–293 (GQLSSLPPDTQNPAS) shows a compositional bias: polar residues. A disordered region spans residues 279-375 (GQLSSLPPDT…QPSTPAPALP (97 aa)). Residues 315–332 (CSSAVSTSVAQSSSPASP) show a composition bias toward low complexity. Polar residues predominate over residues 356–368 (RTSTPSISNSQPS). C2H2-type zinc fingers lie at residues 383–405 (HHCQ…MGCH) and 411–438 (FQCN…CCQH).

It belongs to the Ikaros C2H2-type zinc-finger protein family. Probably self-associates.

The protein localises to the nucleus. Functionally, transcriptional repressor that binds the core 5'GNNTGTNG-3' DNA consensus sequence. This Xenopus laevis (African clawed frog) protein is Zinc finger protein Pegasus (ikzf5).